Consider the following 283-residue polypeptide: Thymidylate synthase (283 aa).

A dUMP-binding site is contributed by Arg22. Cys160 acts as the Nucleophile in catalysis. Residues 180-183 (RSCD), Asn191, and 221-223 (HIY) each bind dUMP. Residue Asp183 coordinates (6R)-5,10-methylene-5,6,7,8-tetrahydrofolate. Ser282 contributes to the (6R)-5,10-methylene-5,6,7,8-tetrahydrofolate binding site.

Belongs to the thymidylate synthase family. Bacterial-type ThyA subfamily. In terms of assembly, homodimer.

The protein localises to the cytoplasm. It catalyses the reaction dUMP + (6R)-5,10-methylene-5,6,7,8-tetrahydrofolate = 7,8-dihydrofolate + dTMP. It functions in the pathway pyrimidine metabolism; dTTP biosynthesis. Functionally, catalyzes the reductive methylation of 2'-deoxyuridine-5'-monophosphate (dUMP) to 2'-deoxythymidine-5'-monophosphate (dTMP) while utilizing 5,10-methylenetetrahydrofolate (mTHF) as the methyl donor and reductant in the reaction, yielding dihydrofolate (DHF) as a by-product. This enzymatic reaction provides an intracellular de novo source of dTMP, an essential precursor for DNA biosynthesis. This chain is Thymidylate synthase, found in Actinobacillus succinogenes (strain ATCC 55618 / DSM 22257 / CCUG 43843 / 130Z).